A 115-amino-acid chain; its full sequence is Con-Ins T1B (115 aa).

Positions 1–24 are cleaved as a signal peptide; the sequence is MTTSFYFLLMALGLLLYVCQSSFG. The propeptide occupies 25–29; it reads NQHTR. Position 34 is a 4-hydroxyproline; partial (P34). 3 disulfides stabilise this stretch: C38/C101, C50/C114, and C100/C105. The propeptide at 52-94 is c peptide; the sequence is RKRNDAGKKRGQASPLWQRGGSLSMLKARAKRNEAFHLQRAHR. At E98 the chain carries 4-carboxyglutamate. The residue at position 104 (P104) is a 4-hydroxyproline; partial. At E109 the chain carries 4-carboxyglutamate; partial. The residue at position 114 (C114) is a Cysteine amide.

The protein belongs to the insulin family. As to quaternary structure, heterodimer of A and B chains; disulfide-linked. Expressed by the venom gland.

It localises to the secreted. Its function is as follows. This venom insulin, from a fish-hunting cone snail, facilitates prey capture by rapidly inducing hypoglycemic shock. It is one of the smallest known insulin found in nature and lacks the C-terminal segment of the B chain that, in human insulin, mediates engagement of the insulin receptor (INSR) and assembly of the hormone's hexameric storage form. Despite lacking this segment, it both binds and activates human insulin receptor (long isoform (HIR-B) of INSR) with a high potency (EC(50)=12.0 nM). In vivo, intraperitoneal injection of this peptide into zebrafish lowers blood glucose with a lower potency than human insulin. In addition, when applied to water, this peptide reduces overall locomotor activity of zebrafish larvae, observed as a significant decrease in the percentage of time spent swimming and movement frequency. When tested on a mouse model of diabetes, this insulin also lowers blood glucose with a 10-fold lower potency than human insulin. The protein is Con-Ins T1B of Conus tulipa (Fish-hunting cone snail).